The sequence spans 143 residues: Hemoglobin subunit alpha (143 aa).

In terms of domain architecture, Globin spans valine 2–arginine 143. The residue at position 4 (serine 4) is a Phosphoserine. Lysine 8 carries the post-translational modification N6-succinyllysine. Threonine 9 carries the post-translational modification Phosphothreonine. An N6-succinyllysine modification is found at lysine 12. Residue lysine 17 is modified to N6-acetyllysine; alternate. The residue at position 17 (lysine 17) is an N6-succinyllysine; alternate. Residue tyrosine 25 is modified to Phosphotyrosine. Phosphoserine is present on serine 36. The residue at position 41 (lysine 41) is an N6-succinyllysine. Serine 51 carries the post-translational modification Phosphoserine. Histidine 60 contributes to the O2 binding site. Position 89 (histidine 89) interacts with heme b. A Phosphoserine modification is found at serine 104. Threonine 110 carries the post-translational modification Phosphothreonine. Serine 126 is subject to Phosphoserine. Threonine 136 carries the phosphothreonine modification. Position 140 is a phosphoserine (serine 140).

It belongs to the globin family. In terms of assembly, heterotetramer of two alpha chains and two beta chains. Red blood cells.

In terms of biological role, involved in oxygen transport from the lung to the various peripheral tissues. Functionally, hemopressin acts as an antagonist peptide of the cannabinoid receptor CNR1. Hemopressin-binding efficiently blocks cannabinoid receptor CNR1 and subsequent signaling. This chain is Hemoglobin subunit alpha (HBA), found in Pipistrellus abramus (Japanese pipistrelle).